Reading from the N-terminus, the 253-residue chain is Sulfate transporter CysZ (253 aa).

A run of 4 helical transmembrane segments spans residues 31-51, 75-95, 151-171, and 222-242; these read FVIL…WWLF, LLWP…FSTI, IVLL…PVLW, and IPLL…AMWV.

Belongs to the CysZ family.

Its subcellular location is the cell inner membrane. High affinity, high specificity proton-dependent sulfate transporter, which mediates sulfate uptake. Provides the sulfur source for the cysteine synthesis pathway. This is Sulfate transporter CysZ from Escherichia coli (strain 55989 / EAEC).